A 158-amino-acid polypeptide reads, in one-letter code: GTP-dependent dephospho-CoA kinase (158 aa).

The GTP site is built by D35, V36, D54, K56, E109, and D132.

It belongs to the GTP-dependent DPCK family.

It carries out the reaction 3'-dephospho-CoA + GTP = GDP + CoA + H(+). The protein operates within cofactor biosynthesis; coenzyme A biosynthesis. Catalyzes the GTP-dependent phosphorylation of the 3'-hydroxyl group of dephosphocoenzyme A to form coenzyme A (CoA). The chain is GTP-dependent dephospho-CoA kinase from Methanococcus vannielii (strain ATCC 35089 / DSM 1224 / JCM 13029 / OCM 148 / SB).